Reading from the N-terminus, the 336-residue chain is MLYPLARHFLFKFNPEQAHDLSIKYLPRLLGTPLDCFFRHSLPKRPVTVMGLYFANPVGLAAGLDKDGECIDAFGAMGFGFIEVGTVTPKPQSGNDKPRLFRVIPAEGIINRMGFNNKGVDHLVAQVKKAKYQGVIGINIGKNKDTPIEQGKDDYLICMDKVYDHAGYIAVNISSPNTPGLRSLQYGDALDELLAALKVRQQELAAQYKKYVPLAVKIAPDLSLDEINQVAASLIKNGIDGVIATNTTLDREMIYDMPHAGEAGGLSGRPLQHKSTEVIRQLAKALDGALPIIGVGGIDSAMAAREKLAAGASLVQIYSGFIYKGPSLVKEIVTHI.

FMN-binding positions include 62–66 (AGLDK) and T86. K66 contributes to the substrate binding site. A substrate-binding site is contributed by 111–115 (NRMGF). Positions 139 and 172 each coordinate FMN. N172 provides a ligand contact to substrate. S175 functions as the Nucleophile in the catalytic mechanism. N177 serves as a coordination point for substrate. Residues K217 and T245 each coordinate FMN. Substrate is bound at residue 246-247 (NT). Residues G268, G297, and 318–319 (YS) contribute to the FMN site.

Belongs to the dihydroorotate dehydrogenase family. Type 2 subfamily. As to quaternary structure, monomer. Requires FMN as cofactor.

Its subcellular location is the cell membrane. The enzyme catalyses (S)-dihydroorotate + a quinone = orotate + a quinol. It participates in pyrimidine metabolism; UMP biosynthesis via de novo pathway; orotate from (S)-dihydroorotate (quinone route): step 1/1. Catalyzes the conversion of dihydroorotate to orotate with quinone as electron acceptor. In Aeromonas salmonicida (strain A449), this protein is Dihydroorotate dehydrogenase (quinone).